Consider the following 267-residue polypeptide: Tryptophan synthase alpha chain (267 aa).

Residues Glu-49 and Asp-60 each act as proton acceptor in the active site.

This sequence belongs to the TrpA family. Tetramer of two alpha and two beta chains.

It catalyses the reaction (1S,2R)-1-C-(indol-3-yl)glycerol 3-phosphate + L-serine = D-glyceraldehyde 3-phosphate + L-tryptophan + H2O. Its pathway is amino-acid biosynthesis; L-tryptophan biosynthesis; L-tryptophan from chorismate: step 5/5. In terms of biological role, the alpha subunit is responsible for the aldol cleavage of indoleglycerol phosphate to indole and glyceraldehyde 3-phosphate. The polypeptide is Tryptophan synthase alpha chain (Rippkaea orientalis (strain PCC 8801 / RF-1) (Cyanothece sp. (strain PCC 8801))).